The following is a 480-amino-acid chain: Bifunctional protein GlmU (480 aa).

Residues 1 to 247 (MATPIDVVIM…AAQVAGVNSP (247 aa)) are pyrophosphorylase. UDP-N-acetyl-alpha-D-glucosamine-binding positions include Lys-24, Gln-86, 91–92 (GT), 113–115 (SGD), Gly-150, Glu-172, and Asn-245. Asp-115 provides a ligand contact to Mg(2+). Mg(2+) is bound at residue Asn-245. Positions 248–268 (VQLAELERVYQLRQATALMEQ) are linker. The N-acetyltransferase stretch occupies residues 269-480 (GVRLADPARF…WKRPVKVSKG (212 aa)). 2 residues coordinate UDP-N-acetyl-alpha-D-glucosamine: Arg-355 and Lys-373. His-385 serves as the catalytic Proton acceptor. Residues Tyr-388 and Asn-399 each contribute to the UDP-N-acetyl-alpha-D-glucosamine site. Residues Ala-402, 408 to 409 (NY), Ser-427, Gly-445, and Arg-462 each bind acetyl-CoA.

It in the N-terminal section; belongs to the N-acetylglucosamine-1-phosphate uridyltransferase family. In the C-terminal section; belongs to the transferase hexapeptide repeat family. In terms of assembly, homotrimer. The cofactor is Mg(2+).

The protein localises to the cytoplasm. The enzyme catalyses alpha-D-glucosamine 1-phosphate + acetyl-CoA = N-acetyl-alpha-D-glucosamine 1-phosphate + CoA + H(+). The catalysed reaction is N-acetyl-alpha-D-glucosamine 1-phosphate + UTP + H(+) = UDP-N-acetyl-alpha-D-glucosamine + diphosphate. Its pathway is nucleotide-sugar biosynthesis; UDP-N-acetyl-alpha-D-glucosamine biosynthesis; N-acetyl-alpha-D-glucosamine 1-phosphate from alpha-D-glucosamine 6-phosphate (route II): step 2/2. It participates in nucleotide-sugar biosynthesis; UDP-N-acetyl-alpha-D-glucosamine biosynthesis; UDP-N-acetyl-alpha-D-glucosamine from N-acetyl-alpha-D-glucosamine 1-phosphate: step 1/1. It functions in the pathway bacterial outer membrane biogenesis; LPS lipid A biosynthesis. In terms of biological role, catalyzes the last two sequential reactions in the de novo biosynthetic pathway for UDP-N-acetylglucosamine (UDP-GlcNAc). The C-terminal domain catalyzes the transfer of acetyl group from acetyl coenzyme A to glucosamine-1-phosphate (GlcN-1-P) to produce N-acetylglucosamine-1-phosphate (GlcNAc-1-P), which is converted into UDP-GlcNAc by the transfer of uridine 5-monophosphate (from uridine 5-triphosphate), a reaction catalyzed by the N-terminal domain. In Polaromonas sp. (strain JS666 / ATCC BAA-500), this protein is Bifunctional protein GlmU.